Consider the following 885-residue polypeptide: Exosome complex component 10 (885 aa).

Lys-19 is covalently cross-linked (Glycyl lysine isopeptide (Lys-Gly) (interchain with G-Cter in SUMO2)). Positions His-289 to Met-455 constitute a 3'-5' exonuclease domain. Mg(2+)-binding residues include Asp-313, Glu-315, Asp-371, and Asp-440. In terms of domain architecture, HRDC spans Asn-503–Lys-583. Lys-583 participates in a covalent cross-link: Glycyl lysine isopeptide (Lys-Gly) (interchain with G-Cter in SUMO1); alternate. A Glycyl lysine isopeptide (Lys-Gly) (interchain with G-Cter in SUMO2); alternate cross-link involves residue Lys-583. Residue Lys-710 forms a Glycyl lysine isopeptide (Lys-Gly) (interchain with G-Cter in SUMO2) linkage. Composition is skewed to basic and acidic residues over residues Ala-776–Gln-794 and Lys-804–Thr-816. Positions Ala-776–Arg-885 are disordered. Ser-821 carries the post-translational modification Phosphoserine. Glycyl lysine isopeptide (Lys-Gly) (interchain with G-Cter in SUMO2) cross-links involve residues Lys-826, Lys-833, and Lys-859. Polar residues predominate over residues Asn-831–Ser-848. The span at Ser-861–Thr-871 shows a compositional bias: polar residues. Lys-873 participates in a covalent cross-link: Glycyl lysine isopeptide (Lys-Gly) (interchain with G-Cter in SUMO2).

Belongs to the exosome component 10/RRP6 family. As to quaternary structure, component of the RNA exosome complex. The catalytically inactive RNA exosome core complex (Exo-9) associates with the catalytic subunit EXOSC10/RRP6 (via its N-terminus). Exo-9 may associate with DIS3 to form the nucleolar exosome complex, or DIS3L to form the cytoplasmic exosome complex. The RNA exosome complex interacts with cofactors C1D/RRP47, MPHOSPH6/MPP6 and MTREX/MTR4. Interacts with MTREX; the interaction with MTREX mediates the association of MTREX with nuclear RNA exosomes. Part of the small subunit (SSU) processome, composed of more than 70 proteins and the RNA chaperone small nucleolar RNA (snoRNA) U3. Interacts with ALYREF/THOC4. Interacts with DHX36; this interaction occurs in a RNase-insensitive manner. Interacts with NRDE2. Interacts (via C-terminus) with USP36 (via C-terminus); the interaction is facilitated by the association with RNA and promotes sumoylation of EXOSC10. Requires Mg(2+) as cofactor. Sumoylated by USP36; sumoylation does not significantly affect EXOSC10 nucleolar localization and association with core exosome and USP36, but regulates the nucleolar RNA exosome activity in rRNA processing by promoting binding of EXOSC10 to pre-rRNAs. Effects of sumoylation on EXOSC10 levels vary between different studies. Sumoylation of EXOSC10 is required for the modulation of EXOSC10 effects on cellular protein translation and cell proliferation. Sumoylation is promoted by mild hypothermia.

The protein resides in the cytoplasm. It is found in the nucleus. It localises to the nucleolus. The protein localises to the nucleoplasm. Its activity is regulated as follows. Arginine-rich dipeptide repeat proteins expressed from C9orf72-derived repeat RNA interact with EXOSC10 and inhibit its ability to promote degradation of this RNA. Functionally, catalytic component of the RNA exosome complex which has 3'-&gt;5' exoribonuclease activity and participates in a multitude of cellular RNA processing and degradation events. In the nucleus, the RNA exosome complex is involved in proper maturation of stable RNA species such as rRNA, snRNA and snoRNA, in the elimination of RNA processing by-products and non-coding 'pervasive' transcripts, such as antisense RNA species and promoter-upstream transcripts (PROMPTs), and of mRNAs with processing defects, thereby limiting or excluding their export to the cytoplasm. Part of the small subunit (SSU) processome, first precursor of the small eukaryotic ribosomal subunit. During the assembly of the SSU processome in the nucleolus, many ribosome biogenesis factors, an RNA chaperone and ribosomal proteins associate with the nascent pre-rRNA and work in concert to generate RNA folding, modifications, rearrangements and cleavage as well as targeted degradation of pre-ribosomal RNA by the RNA exosome. The RNA exosome may be involved in Ig class switch recombination (CSR) and/or Ig variable region somatic hypermutation (SHM) by targeting AICDA deamination activity to transcribed dsDNA substrates. In the cytoplasm, the RNA exosome complex is involved in general mRNA turnover and specifically degrades inherently unstable mRNAs containing AU-rich elements (AREs) within their 3' untranslated regions, and in RNA surveillance pathways, preventing translation of aberrant mRNAs. It seems to be involved in degradation of histone mRNA. EXOSC10 is required for nucleolar localization of C1D and probably mediates the association of MTREX, C1D and MPHOSPH6 with the RNA exosome involved in the maturation of 5.8S rRNA. Plays a role in the recruitment of replication protein A complex (RPA) and RAD51 to DNA double-strand breaks caused by irradiation, contributing to DNA repair by homologous recombination. Regulates levels of damage-induced RNAs in order to prevent DNA-RNA hybrid formation at DNA double-strand breaks and limit DNA end resection after damage. Plays a role in oocyte development, maturation and survival. Required for normal testis development and mitotic division of spermatogonia. Plays a role in proper embryo development. Required for global protein translation. Required for cell proliferation. Regulates metabolism of C9orf72-derived repeat RNA that can be translated into toxic dipeptide repeat proteins. The protein is Exosome complex component 10 of Homo sapiens (Human).